Consider the following 153-residue polypeptide: Lysine-acyltransferase RtxC (153 aa).

His-32 is an active-site residue.

Belongs to the RTX toxin acyltransferase family.

Its subcellular location is the cytoplasm. The enzyme catalyses a fatty acyl-[ACP] + L-lysyl-[protein] = N(6)-(fatty acyl)-L-lysyl-[protein] + holo-[ACP] + H(+). Its function is as follows. Catalyzes fatty acylation of the protoxin (RtxA) at internal lysine residues, thereby converting it to the active toxin. This is Lysine-acyltransferase RtxC (rtxC) from Vibrio cholerae serotype O1 (strain ATCC 39315 / El Tor Inaba N16961).